The following is a 90-amino-acid chain: DNA-directed RNA polymerase subunit omega (90 aa).

A disordered region spans residues 69–90 (RQEQQEQDAAELAAVSSITHNR).

The protein belongs to the RNA polymerase subunit omega family. The RNAP catalytic core consists of 2 alpha, 1 beta, 1 beta' and 1 omega subunit. When a sigma factor is associated with the core the holoenzyme is formed, which can initiate transcription.

The catalysed reaction is RNA(n) + a ribonucleoside 5'-triphosphate = RNA(n+1) + diphosphate. In terms of biological role, promotes RNA polymerase assembly. Latches the N- and C-terminal regions of the beta' subunit thereby facilitating its interaction with the beta and alpha subunits. The protein is DNA-directed RNA polymerase subunit omega of Aliivibrio salmonicida (strain LFI1238) (Vibrio salmonicida (strain LFI1238)).